A 286-amino-acid chain; its full sequence is Pantothenate synthetase (286 aa).

30–37 lines the ATP pocket; sequence MGALHEGH. The active-site Proton donor is the histidine 37. Glutamine 61 contributes to the (R)-pantoate binding site. Glutamine 61 lines the beta-alanine pocket. 147–150 lines the ATP pocket; that stretch reads GEKD. Glutamine 153 contributes to the (R)-pantoate binding site. Residues valine 180 and 188-191 contribute to the ATP site; that span reads LSSR.

The protein belongs to the pantothenate synthetase family. As to quaternary structure, homodimer.

Its subcellular location is the cytoplasm. It catalyses the reaction (R)-pantoate + beta-alanine + ATP = (R)-pantothenate + AMP + diphosphate + H(+). It functions in the pathway cofactor biosynthesis; (R)-pantothenate biosynthesis; (R)-pantothenate from (R)-pantoate and beta-alanine: step 1/1. Functionally, catalyzes the condensation of pantoate with beta-alanine in an ATP-dependent reaction via a pantoyl-adenylate intermediate. This Novosphingobium aromaticivorans (strain ATCC 700278 / DSM 12444 / CCUG 56034 / CIP 105152 / NBRC 16084 / F199) protein is Pantothenate synthetase.